The sequence spans 159 residues: uncharacterized protein (159 aa).

This is an uncharacterized protein from Aquifex aeolicus (strain VF5).